The primary structure comprises 372 residues: tRNA N6-adenosine threonylcarbamoyltransferase (372 aa).

Residues H133, H137, and Y154 each coordinate a divalent metal cation. Residues 154 to 158, D186, G201, E205, and N301 contribute to the substrate site; that span reads YVSGG. Residue D330 coordinates a divalent metal cation.

It belongs to the KAE1 / TsaD family. As to quaternary structure, component of the EKC/KEOPS complex composed of at least BUD32, CGI121, GON7, KAE1 and PCC1; the whole complex dimerizes. The cofactor is a divalent metal cation.

The protein localises to the cytoplasm. It localises to the nucleus. The enzyme catalyses L-threonylcarbamoyladenylate + adenosine(37) in tRNA = N(6)-L-threonylcarbamoyladenosine(37) in tRNA + AMP + H(+). In terms of biological role, component of the EKC/KEOPS complex that is required for the formation of a threonylcarbamoyl group on adenosine at position 37 (t(6)A37) in tRNAs that read codons beginning with adenine. The complex is probably involved in the transfer of the threonylcarbamoyl moiety of threonylcarbamoyl-AMP (TC-AMP) to the N6 group of A37. KAE1 likely plays a direct catalytic role in this reaction, but requires other protein(s) of the complex to fulfill this activity. The EKC/KEOPS complex also promotes both telomere uncapping and telomere elongation. The complex is required for efficient recruitment of transcriptional coactivators. The polypeptide is tRNA N6-adenosine threonylcarbamoyltransferase (Candida albicans (strain SC5314 / ATCC MYA-2876) (Yeast)).